A 236-amino-acid polypeptide reads, in one-letter code: NAD-dependent protein deacetylase (236 aa).

One can recognise a Deacetylase sirtuin-type domain in the interval 1–236 (MIKDWLQESN…EFLRSISNEG (236 aa)). Ala18, Thr22, Phe29, Arg30, Gln96, Val98, Asp99, and His114 together coordinate NAD(+). Phe29 is a nicotinamide binding site. Residues Val98 and Asp99 each coordinate nicotinamide. His114 serves as the catalytic Proton acceptor. Residues Cys122, Cys125, Cys141, and Cys143 each contribute to the Zn(2+) site. Residues Ser181, Ser182, Asn206, and Ile225 each coordinate NAD(+).

Belongs to the sirtuin family. Class U subfamily. It depends on Zn(2+) as a cofactor.

The protein localises to the cytoplasm. It carries out the reaction N(6)-acetyl-L-lysyl-[protein] + NAD(+) + H2O = 2''-O-acetyl-ADP-D-ribose + nicotinamide + L-lysyl-[protein]. Functionally, NAD-dependent protein deacetylase which modulates the activities of several enzymes which are inactive in their acetylated form. This Oceanobacillus iheyensis (strain DSM 14371 / CIP 107618 / JCM 11309 / KCTC 3954 / HTE831) protein is NAD-dependent protein deacetylase.